The sequence spans 380 residues: Cytochrome b (380 aa).

Transmembrane regions (helical) follow at residues 34 to 54 (FGSLLAVCLATQILTGLLLAM), 78 to 99 (WLIRNLHANGASFFFICIFLHI), 114 to 134 (WNTGVILLLTLMATAFVGYVL), and 179 to 199 (FFALHFLLPFVIAGITIIHLT). Heme b-binding residues include H84 and H98. The heme b site is built by H183 and H197. H202 is a binding site for a ubiquinone. 4 helical membrane passes run 227–247 (LKDILGLALMFIPFLALALFS), 289–309 (LGGVLALAASVLILLLIPFLH), 321–341 (LSQILFWLLVANLLVLTWIGS), and 348–368 (FIIIGQVASFSYFNILLILFP).

It belongs to the cytochrome b family. As to quaternary structure, the cytochrome bc1 complex contains 11 subunits: 3 respiratory subunits (MT-CYB, CYC1 and UQCRFS1), 2 core proteins (UQCRC1 and UQCRC2) and 6 low-molecular weight proteins (UQCRH/QCR6, UQCRB/QCR7, UQCRQ/QCR8, UQCR10/QCR9, UQCR11/QCR10 and a cleavage product of UQCRFS1). This cytochrome bc1 complex then forms a dimer. It depends on heme b as a cofactor.

The protein resides in the mitochondrion inner membrane. Component of the ubiquinol-cytochrome c reductase complex (complex III or cytochrome b-c1 complex) that is part of the mitochondrial respiratory chain. The b-c1 complex mediates electron transfer from ubiquinol to cytochrome c. Contributes to the generation of a proton gradient across the mitochondrial membrane that is then used for ATP synthesis. In Polyplectron bicalcaratum (Grey peacock-pheasant), this protein is Cytochrome b (MT-CYB).